A 448-amino-acid chain; its full sequence is Probable glycine dehydrogenase (decarboxylating) subunit 1 (448 aa).

The protein belongs to the GcvP family. N-terminal subunit subfamily. The glycine cleavage system is composed of four proteins: P, T, L and H. In this organism, the P 'protein' is a heterodimer of two subunits.

It carries out the reaction N(6)-[(R)-lipoyl]-L-lysyl-[glycine-cleavage complex H protein] + glycine + H(+) = N(6)-[(R)-S(8)-aminomethyldihydrolipoyl]-L-lysyl-[glycine-cleavage complex H protein] + CO2. In terms of biological role, the glycine cleavage system catalyzes the degradation of glycine. The P protein binds the alpha-amino group of glycine through its pyridoxal phosphate cofactor; CO(2) is released and the remaining methylamine moiety is then transferred to the lipoamide cofactor of the H protein. The polypeptide is Probable glycine dehydrogenase (decarboxylating) subunit 1 (Geobacillus kaustophilus (strain HTA426)).